We begin with the raw amino-acid sequence, 201 residues long: 3-isopropylmalate dehydratase small subunit (201 aa).

The protein belongs to the LeuD family. LeuD type 1 subfamily. Heterodimer of LeuC and LeuD.

It catalyses the reaction (2R,3S)-3-isopropylmalate = (2S)-2-isopropylmalate. It functions in the pathway amino-acid biosynthesis; L-leucine biosynthesis; L-leucine from 3-methyl-2-oxobutanoate: step 2/4. Functionally, catalyzes the isomerization between 2-isopropylmalate and 3-isopropylmalate, via the formation of 2-isopropylmaleate. The sequence is that of 3-isopropylmalate dehydratase small subunit from Sinorhizobium medicae (strain WSM419) (Ensifer medicae).